Consider the following 202-residue polypeptide: NADH-quinone oxidoreductase subunit B (202 aa).

Cys81, Cys82, Cys146, and Cys176 together coordinate [4Fe-4S] cluster.

The protein belongs to the complex I 20 kDa subunit family. As to quaternary structure, NDH-1 is composed of 14 different subunits. Subunits NuoB, C, D, E, F, and G constitute the peripheral sector of the complex. [4Fe-4S] cluster serves as cofactor.

The protein resides in the cell inner membrane. The enzyme catalyses a quinone + NADH + 5 H(+)(in) = a quinol + NAD(+) + 4 H(+)(out). In terms of biological role, NDH-1 shuttles electrons from NADH, via FMN and iron-sulfur (Fe-S) centers, to quinones in the respiratory chain. The immediate electron acceptor for the enzyme in this species is believed to be ubiquinone. Couples the redox reaction to proton translocation (for every two electrons transferred, four hydrogen ions are translocated across the cytoplasmic membrane), and thus conserves the redox energy in a proton gradient. This Bradyrhizobium diazoefficiens (strain JCM 10833 / BCRC 13528 / IAM 13628 / NBRC 14792 / USDA 110) protein is NADH-quinone oxidoreductase subunit B.